We begin with the raw amino-acid sequence, 245 residues long: Membrane-spanning 4-domains subfamily A member 15 (245 aa).

The disordered stretch occupies residues 1-30 (MWERRGRGESAAGTAAVASRNASGLRPPPA). 4 helical membrane passes run 78–98 (GTVQILIGLIHLGFGSVLLMV), 103–123 (LGMLFIEGGVPFWGGACFIIS), 147–167 (ILSAMAAFAGTAILLMDFGVT), and 176–196 (LAVLTIFTILEFFIAVIATHF).

This sequence belongs to the MS4A family.

The protein resides in the membrane. Functionally, may be involved in signal transduction as a component of a multimeric receptor complex. This chain is Membrane-spanning 4-domains subfamily A member 15 (Ms4a15), found in Mus musculus (Mouse).